The chain runs to 986 residues: Bifunctional glutamine synthetase adenylyltransferase/adenylyl-removing enzyme (986 aa).

The interval 1-475 (MSFPLAHVDA…VFDHLIGEEK (475 aa)) is adenylyl removase. Positions 481-986 (TETLWHDFLE…LFEHNDKYEE (506 aa)) are adenylyl transferase.

It belongs to the GlnE family. Mg(2+) serves as cofactor.

The catalysed reaction is [glutamine synthetase]-O(4)-(5'-adenylyl)-L-tyrosine + phosphate = [glutamine synthetase]-L-tyrosine + ADP. It carries out the reaction [glutamine synthetase]-L-tyrosine + ATP = [glutamine synthetase]-O(4)-(5'-adenylyl)-L-tyrosine + diphosphate. Its function is as follows. Involved in the regulation of glutamine synthetase GlnA, a key enzyme in the process to assimilate ammonia. When cellular nitrogen levels are high, the C-terminal adenylyl transferase (AT) inactivates GlnA by covalent transfer of an adenylyl group from ATP to specific tyrosine residue of GlnA, thus reducing its activity. Conversely, when nitrogen levels are low, the N-terminal adenylyl removase (AR) activates GlnA by removing the adenylyl group by phosphorolysis, increasing its activity. The regulatory region of GlnE binds the signal transduction protein PII (GlnB) which indicates the nitrogen status of the cell. The sequence is that of Bifunctional glutamine synthetase adenylyltransferase/adenylyl-removing enzyme from Pasteurella multocida (strain Pm70).